The chain runs to 441 residues: Tryptophan aminotransferase-related protein 1 (441 aa).

Pyridoxal 5'-phosphate contacts are provided by residues tyrosine 110, 152 to 153 (ST), asparagine 219, 239 to 242 (DLAY), 262 to 265 (TVSK), and arginine 273. At lysine 265 the chain carries N6-(pyridoxal phosphate)lysine.

This sequence belongs to the alliinase family. It depends on pyridoxal 5'-phosphate as a cofactor. In terms of tissue distribution, highly expressed in anthers. Expressed at low levels in ovaries.

The enzyme catalyses L-tryptophan + 2-oxoglutarate = indole-3-pyruvate + L-glutamate. It participates in plant hormone metabolism; auxin biosynthesis. Functionally, probable tryptophan aminotransferase that may be involved in the regulation of auxin production in developing rice grains. The sequence is that of Tryptophan aminotransferase-related protein 1 from Oryza sativa subsp. japonica (Rice).